Here is a 180-residue protein sequence, read N- to C-terminus: MTLKDIVVGFGTQLRSIWMIGLHAFSKRETRMYPEEPVYLPPRYRGRIVLTRDPDGQERCVACNLCAVACPVGCISLQKAETVDGRWYPEFFRINFSRCIFCGMCEEACPTTAIQLTPDFELGEFKRQDLVYEKEDLLISGPGKYPEYNFYRMAGMAIDGKDKGDAENEAKPIDVKGLLP.

4Fe-4S ferredoxin-type domains follow at residues 48 to 80 (IVLTRDPDGQERCVACNLCAVACPVGCISLQKA) and 90 to 119 (EFFRINFSRCIFCGMCEEACPTTAIQLTPD). Positions 60, 63, 66, 70, 99, 102, 105, and 109 each coordinate [4Fe-4S] cluster.

This sequence belongs to the complex I 23 kDa subunit family. In terms of assembly, NDH-1 is composed of 13 different subunits. Subunits NuoA, H, J, K, L, M, N constitute the membrane sector of the complex. [4Fe-4S] cluster serves as cofactor.

It localises to the cell inner membrane. It carries out the reaction a quinone + NADH + 5 H(+)(in) = a quinol + NAD(+) + 4 H(+)(out). In terms of biological role, NDH-1 shuttles electrons from NADH, via FMN and iron-sulfur (Fe-S) centers, to quinones in the respiratory chain. The immediate electron acceptor for the enzyme in this species is believed to be ubiquinone. Couples the redox reaction to proton translocation (for every two electrons transferred, four hydrogen ions are translocated across the cytoplasmic membrane), and thus conserves the redox energy in a proton gradient. The sequence is that of NADH-quinone oxidoreductase subunit I from Cronobacter sakazakii (strain ATCC BAA-894) (Enterobacter sakazakii).